The primary structure comprises 293 residues: MPEGKIVKALSGFYYVQHEEGITQCRGRGVFRKNKITPLVGDQVVFQADNPSEGYVLEVFDRKNELVRPPIANVDQAILVFSAVEPDFNPGLLDRFLVLIEYHNIKPIICISKMDLVDEKMRETVESYANDYREMGYDVLFTSINTSESIDILKPFLEGCVSVVAGQSGVGKSSMLNVLRPELELKTNDISSHLGRGKHTTRHVELIAIGSGLVADTPGFSSLDFIDIEVEDLTYCFPELKEASQYCKFRGCTHLSEPKCAVKAAVEEGKITEYRYKNYKQFVEEIRERKPRY.

The CP-type G domain occupies 63 to 223 (KNELVRPPIA…VADTPGFSSL (161 aa)). GTP contacts are provided by residues 112–115 (SKMD) and 166–174 (GQSGVGKSS). The Zn(2+) site is built by cysteine 247, cysteine 252, histidine 254, and cysteine 260.

Belongs to the TRAFAC class YlqF/YawG GTPase family. RsgA subfamily. In terms of assembly, monomer. Associates with 30S ribosomal subunit, binds 16S rRNA. Zn(2+) is required as a cofactor.

Its subcellular location is the cytoplasm. One of several proteins that assist in the late maturation steps of the functional core of the 30S ribosomal subunit. Helps release RbfA from mature subunits. May play a role in the assembly of ribosomal proteins into the subunit. Circularly permuted GTPase that catalyzes slow GTP hydrolysis, GTPase activity is stimulated by the 30S ribosomal subunit. The polypeptide is Small ribosomal subunit biogenesis GTPase RsgA (Bacillus cereus (strain ATCC 10987 / NRS 248)).